A 235-amino-acid polypeptide reads, in one-letter code: MQQKSDNVVSHYVFEAPVRIWHWLTVLCMAVLMVTGYFIGKPLPSVSGEATYLFYMGYIRLIHFSAGMVFTVVLLMRIYWAFVGNRYSRELFIVPVWRKSWWQGVWYEIRWYLFLAKRPSADIGHNPIAQAAMFGYFLMSVFMIITGFALYSEHSQYAIFAPFRYVVEFFYWTGGNSMDIHSWHRLGMWLIGAFVIGHVYMALREDIMSDDTVISTMVNGYRSHKFGKISNKERS.

Residues 1–19 (MQQKSDNVVSHYVFEAPVR) lie on the Cytoplasmic side of the membrane. Residues 20–40 (IWHWLTVLCMAVLMVTGYFIG) form a helical membrane-spanning segment. Residues 41–63 (KPLPSVSGEATYLFYMGYIRLIH) are Periplasmic-facing. Residues 64–84 (FSAGMVFTVVLLMRIYWAFVG) form a helical membrane-spanning segment. Topologically, residues 85–130 (NRYSRELFIVPVWRKSWWQGVWYEIRWYLFLAKRPSADIGHNPIAQ) are cytoplasmic. Residues 131–151 (AAMFGYFLMSVFMIITGFALY) traverse the membrane as a helical segment. Over 152–185 (SEHSQYAIFAPFRYVVEFFYWTGGNSMDIHSWHR) the chain is Periplasmic. The chain crosses the membrane as a helical span at residues 186–203 (LGMWLIGAFVIGHVYMAL). Over 204–235 (REDIMSDDTVISTMVNGYRSHKFGKISNKERS) the chain is Cytoplasmic.

This sequence belongs to the HupC/HyaC/HydC family.

Its subcellular location is the cell inner membrane. Its function is as follows. Probable b-type cytochrome. The sequence is that of Probable Ni/Fe-hydrogenase 1 B-type cytochrome subunit (hyaC) from Escherichia coli O157:H7.